A 161-amino-acid chain; its full sequence is Endoribonuclease YbeY (161 aa).

Residues His121, His125, and His131 each contribute to the Zn(2+) site.

The protein belongs to the endoribonuclease YbeY family. It depends on Zn(2+) as a cofactor.

The protein localises to the cytoplasm. In terms of biological role, single strand-specific metallo-endoribonuclease involved in late-stage 70S ribosome quality control and in maturation of the 3' terminus of the 16S rRNA. The polypeptide is Endoribonuclease YbeY (Bordetella avium (strain 197N)).